A 578-amino-acid polypeptide reads, in one-letter code: Protein SIA1 (578 aa).

The signal sequence occupies residues 1–28 (MFRNRRILLYARRFFLVWICFLFITSWS).

Functionally, may be involved in the activation of the plasma membrane proton-ATPase by glucose. This is Protein SIA1 (SIA1) from Kluyveromyces lactis (strain ATCC 8585 / CBS 2359 / DSM 70799 / NBRC 1267 / NRRL Y-1140 / WM37) (Yeast).